The chain runs to 343 residues: Protein RecA (343 aa).

64–71 lines the ATP pocket; sequence GPESSGKT.

It belongs to the RecA family.

The protein localises to the cytoplasm. Its function is as follows. Can catalyze the hydrolysis of ATP in the presence of single-stranded DNA, the ATP-dependent uptake of single-stranded DNA by duplex DNA, and the ATP-dependent hybridization of homologous single-stranded DNAs. It interacts with LexA causing its activation and leading to its autocatalytic cleavage. The protein is Protein RecA of Acidiphilium cryptum (strain JF-5).